The sequence spans 397 residues: Mannitol-1-phosphate 5-dehydrogenase (397 aa).

A9–G20 contacts NAD(+). The active site involves K220.

It belongs to the mannitol dehydrogenase family. As to quaternary structure, monomer.

The enzyme catalyses D-mannitol 1-phosphate + NAD(+) = beta-D-fructose 6-phosphate + NADH + H(+). Its function is as follows. Catalyzes the NAD(H)-dependent interconversion of D-fructose 6-phosphate and D-mannitol 1-phosphate in the mannitol metabolic pathway. This chain is Mannitol-1-phosphate 5-dehydrogenase, found in Podospora anserina (strain S / ATCC MYA-4624 / DSM 980 / FGSC 10383) (Pleurage anserina).